The chain runs to 395 residues: Phosphoglycerate kinase (395 aa).

Substrate is bound by residues Asp21–Asn23, Arg36, His59–Arg62, Arg120, and Arg153. ATP-binding positions include Lys203, Gly294, Glu325, and Gly351 to Ser354.

It belongs to the phosphoglycerate kinase family. As to quaternary structure, monomer.

The protein localises to the cytoplasm. The enzyme catalyses (2R)-3-phosphoglycerate + ATP = (2R)-3-phospho-glyceroyl phosphate + ADP. Its pathway is carbohydrate degradation; glycolysis; pyruvate from D-glyceraldehyde 3-phosphate: step 2/5. This Finegoldia magna (strain ATCC 29328 / DSM 20472 / WAL 2508) (Peptostreptococcus magnus) protein is Phosphoglycerate kinase.